Reading from the N-terminus, the 726-residue chain is Catalase-peroxidase (726 aa).

A disordered region spans residues 1–33; it reads MSTSDDIHNTTATGKCPFHQGGHDQSAGAGTTT. Residues 105–226 constitute a cross-link (tryptophyl-tyrosyl-methioninium (Trp-Tyr) (with M-252)); the sequence is WHGAGTYRSI…LGATEMGLIY (122 aa). His-106 acts as the Proton acceptor in catalysis. A cross-link (tryptophyl-tyrosyl-methioninium (Tyr-Met) (with W-105)) is located at residues 226–252; that stretch reads YVNPEGPDHSGEPLSAAAAIRATFGNM. Heme b is bound at residue His-267.

The protein belongs to the peroxidase family. Peroxidase/catalase subfamily. Homodimer or homotetramer. The cofactor is heme b. Post-translationally, formation of the three residue Trp-Tyr-Met cross-link is important for the catalase, but not the peroxidase activity of the enzyme.

The enzyme catalyses H2O2 + AH2 = A + 2 H2O. It catalyses the reaction 2 H2O2 = O2 + 2 H2O. In terms of biological role, bifunctional enzyme with both catalase and broad-spectrum peroxidase activity. In Escherichia coli (strain K12 / DH10B), this protein is Catalase-peroxidase.